A 286-amino-acid polypeptide reads, in one-letter code: Eukaryotic translation initiation factor 3 subunit J (286 aa).

3 disordered regions span residues 1 to 35 (MSWD…DSWD), 141 to 162 (AASG…HPLF), and 229 to 258 (KAER…AVKT). Residues 21–35 (WEEEGNDEPLLDSWD) are compositionally biased toward acidic residues. The stretch at 35-75 (DIDEEEVARKKKEEEAKKKAEKEALKKKQEESKAKKLSKNK) forms a coiled coil.

It belongs to the eIF-3 subunit J family. As to quaternary structure, component of the eukaryotic translation initiation factor 3 (eIF-3) complex.

Its subcellular location is the cytoplasm. In terms of biological role, component of the eukaryotic translation initiation factor 3 (eIF-3) complex, which is involved in protein synthesis of a specialized repertoire of mRNAs and, together with other initiation factors, stimulates binding of mRNA and methionyl-tRNAi to the 40S ribosome. The eIF-3 complex specifically targets and initiates translation of a subset of mRNAs involved in cell proliferation. This chain is Eukaryotic translation initiation factor 3 subunit J, found in Debaryomyces hansenii (strain ATCC 36239 / CBS 767 / BCRC 21394 / JCM 1990 / NBRC 0083 / IGC 2968) (Yeast).